A 128-amino-acid polypeptide reads, in one-letter code: T-cell leukemia/lymphoma protein 1B (128 aa).

The protein belongs to the TCL1 family. Interacts with AKT1 and AKT2 (via PH domain). Does not interact with AKT3. As to expression, expressed in a variety of tissues including placenta and testis.

In terms of biological role, enhances the phosphorylation and activation of AKT1 and AKT2. The polypeptide is T-cell leukemia/lymphoma protein 1B (TCL1B) (Homo sapiens (Human)).